The chain runs to 192 residues: Pyridoxal 5'-phosphate synthase subunit PdxT (192 aa).

Position 53 to 55 (53 to 55 (GES)) interacts with L-glutamine. Cysteine 85 acts as the Nucleophile in catalysis. L-glutamine is bound by residues arginine 112 and 140–141 (IR). Catalysis depends on charge relay system residues histidine 176 and glutamate 178.

The protein belongs to the glutaminase PdxT/SNO family. As to quaternary structure, in the presence of PdxS, forms a dodecamer of heterodimers. Only shows activity in the heterodimer.

It carries out the reaction aldehydo-D-ribose 5-phosphate + D-glyceraldehyde 3-phosphate + L-glutamine = pyridoxal 5'-phosphate + L-glutamate + phosphate + 3 H2O + H(+). The catalysed reaction is L-glutamine + H2O = L-glutamate + NH4(+). Its pathway is cofactor biosynthesis; pyridoxal 5'-phosphate biosynthesis. In terms of biological role, catalyzes the hydrolysis of glutamine to glutamate and ammonia as part of the biosynthesis of pyridoxal 5'-phosphate. The resulting ammonia molecule is channeled to the active site of PdxS. The chain is Pyridoxal 5'-phosphate synthase subunit PdxT from Natronomonas pharaonis (strain ATCC 35678 / DSM 2160 / CIP 103997 / JCM 8858 / NBRC 14720 / NCIMB 2260 / Gabara) (Halobacterium pharaonis).